A 448-amino-acid polypeptide reads, in one-letter code: Carbamoyl phosphate synthase arginine-specific small chain (448 aa).

The transit peptide at Met1 to Met27 directs the protein to the mitochondrion. The Glutamine amidotransferase type-1 domain occupies His224–Ala415. The active-site Nucleophile is Cys304. Catalysis depends on residues His388 and Glu390.

The protein belongs to the CarA family. As to quaternary structure, heterodimer composed of 2 chains; the small (or glutamine) chain promotes the hydrolysis of glutamine to ammonia, which is used by the large (or ammonia) chain to synthesize carbamoyl phosphate.

It localises to the mitochondrion matrix. The catalysed reaction is hydrogencarbonate + L-glutamine + 2 ATP + H2O = carbamoyl phosphate + L-glutamate + 2 ADP + phosphate + 2 H(+). It carries out the reaction L-glutamine + H2O = L-glutamate + NH4(+). It participates in amino-acid biosynthesis; L-arginine biosynthesis; carbamoyl phosphate from bicarbonate: step 1/1. Its function is as follows. Small subunit of the arginine-specific carbamoyl phosphate synthase (CPSase). CPSase catalyzes the formation of carbamoyl phosphate from the ammonia moiety of glutamine, carbonate, and phosphate donated by ATP, the first step of the arginine biosynthetic pathway. The small subunit (glutamine amidotransferase) binds and cleaves glutamine to supply the large subunit with the substrate ammonia. The sequence is that of Carbamoyl phosphate synthase arginine-specific small chain (CPA1) from Yarrowia lipolytica (strain CLIB 122 / E 150) (Yeast).